A 434-amino-acid chain; its full sequence is Serine hydroxymethyltransferase 2 (434 aa).

(6S)-5,6,7,8-tetrahydrofolate-binding positions include Leu136 and 140–142 (GHL). Lys245 is modified (N6-(pyridoxal phosphate)lysine).

This sequence belongs to the SHMT family. Homodimer. Pyridoxal 5'-phosphate is required as a cofactor.

It localises to the cytoplasm. It carries out the reaction (6R)-5,10-methylene-5,6,7,8-tetrahydrofolate + glycine + H2O = (6S)-5,6,7,8-tetrahydrofolate + L-serine. The protein operates within one-carbon metabolism; tetrahydrofolate interconversion. It functions in the pathway amino-acid biosynthesis; glycine biosynthesis; glycine from L-serine: step 1/1. Catalyzes the reversible interconversion of serine and glycine with tetrahydrofolate (THF) serving as the one-carbon carrier. This reaction serves as the major source of one-carbon groups required for the biosynthesis of purines, thymidylate, methionine, and other important biomolecules. Also exhibits THF-independent aldolase activity toward beta-hydroxyamino acids, producing glycine and aldehydes, via a retro-aldol mechanism. This Rhodopseudomonas palustris (strain ATCC BAA-98 / CGA009) protein is Serine hydroxymethyltransferase 2.